Reading from the N-terminus, the 147-residue chain is Small ribosomal subunit protein uS12 (147 aa).

Belongs to the universal ribosomal protein uS12 family. As to quaternary structure, part of the 30S ribosomal subunit.

Its function is as follows. With S4 and S5 plays an important role in translational accuracy. Located at the interface of the 30S and 50S subunits. The polypeptide is Small ribosomal subunit protein uS12 (Saccharolobus solfataricus (strain ATCC 35092 / DSM 1617 / JCM 11322 / P2) (Sulfolobus solfataricus)).